The following is a 930-amino-acid chain: Isoleucine--tRNA ligase (930 aa).

The 'HIGH' region motif lies at 57–67 (PYANGNIHVGH). L-isoleucyl-5'-AMP is bound at residue E554. Positions 595-599 (KMSKS) match the 'KMSKS' region motif. K598 lines the ATP pocket. 4 residues coordinate Zn(2+): C888, C891, C908, and C911.

Belongs to the class-I aminoacyl-tRNA synthetase family. IleS type 1 subfamily. In terms of assembly, monomer. Zn(2+) is required as a cofactor.

It localises to the cytoplasm. The enzyme catalyses tRNA(Ile) + L-isoleucine + ATP = L-isoleucyl-tRNA(Ile) + AMP + diphosphate. Its function is as follows. Catalyzes the attachment of isoleucine to tRNA(Ile). As IleRS can inadvertently accommodate and process structurally similar amino acids such as valine, to avoid such errors it has two additional distinct tRNA(Ile)-dependent editing activities. One activity is designated as 'pretransfer' editing and involves the hydrolysis of activated Val-AMP. The other activity is designated 'posttransfer' editing and involves deacylation of mischarged Val-tRNA(Ile). The polypeptide is Isoleucine--tRNA ligase (Streptococcus pneumoniae serotype 4 (strain ATCC BAA-334 / TIGR4)).